The primary structure comprises 366 residues: Prostaglandin F2-alpha receptor (366 aa).

The Extracellular portion of the chain corresponds to 1–31 (MSMNSSKQPVSPAAGLIANTTCQTENRLSVF). Residues asparagine 4 and asparagine 19 are each glycosylated (N-linked (GlcNAc...) asparagine). A helical transmembrane segment spans residues 32 to 55 (FSIIFMTVGILSNSLAIAILMKAY). Over 56–69 (QRFRQKSKASFLLL) the chain is Cytoplasmic. Residues 70–90 (ASGLVITDFFGHLINGGIAVF) form a helical membrane-spanning segment. The Extracellular segment spans residues 91–109 (VYASDKDWIRFDQSNILCS). Cysteine 108 and cysteine 186 are oxidised to a cystine. The helical transmembrane segment at 110–131 (IFGISMVFSGLCPLFLGSAMAI) threads the bilayer. At 132-152 (ERCIGVTNPIFHSTKITSKHV) the chain is on the cytoplasmic side. A helical membrane pass occupies residues 153–175 (KMILSGVCMFAVFVAVLPILGHR). The Extracellular segment spans residues 176–198 (DYQIQASRTWCFYNTEHIEDWED). The chain crosses the membrane as a helical span at residues 199-224 (RFYLLFFSFLGLLALGVSFSCNAVTG). The Cytoplasmic portion of the chain corresponds to 225–250 (VTLLRVKFRSQQHRQGRSHHLEMIIQ). Residues 251 to 267 (LLAIMCVSCVCWSPFLV) form a helical membrane-spanning segment. Residues 268 to 285 (TMANIAINGNNSPVTCET) lie on the Extracellular side of the membrane. Residues 286–307 (TLFALRMATWNQILDPWVYILL) traverse the membrane as a helical segment. Residues 308 to 366 (RKAVLRNLYKLASRCCGVNIISLHIWELSSIKNSLKVAAISESPAAEKESQQASSEAGL) are Cytoplasmic-facing.

Belongs to the G-protein coupled receptor 1 family.

It is found in the cell membrane. Functionally, receptor for prostaglandin F2-alpha (PGF2-alpha). The activity of this receptor is mediated by G proteins which activate a phosphatidylinositol-calcium second messenger system. Initiates luteolysis in the corpus luteum. The polypeptide is Prostaglandin F2-alpha receptor (Ptgfr) (Mus musculus (Mouse)).